The following is a 443-amino-acid chain: Phosphoribosylamine--glycine ligase (443 aa).

The ATP-grasp domain occupies 109 to 324 (RNLFKKYNIK…FLDVCFGISN (216 aa)). 140–202 (MTGLGKDVVV…EEKLVGVEFT (63 aa)) lines the ATP pocket. 3 residues coordinate Mg(2+): glutamine 282, glutamate 294, and asparagine 296. Residues glutamine 282, glutamate 294, and asparagine 296 each contribute to the Mn(2+) site.

Belongs to the GARS family. Mg(2+) serves as cofactor. The cofactor is Mn(2+).

The catalysed reaction is 5-phospho-beta-D-ribosylamine + glycine + ATP = N(1)-(5-phospho-beta-D-ribosyl)glycinamide + ADP + phosphate + H(+). Its pathway is purine metabolism; IMP biosynthesis via de novo pathway; N(1)-(5-phospho-D-ribosyl)glycinamide from 5-phospho-alpha-D-ribose 1-diphosphate: step 2/2. This is Phosphoribosylamine--glycine ligase from Methanococcus vannielii (strain ATCC 35089 / DSM 1224 / JCM 13029 / OCM 148 / SB).